A 230-amino-acid polypeptide reads, in one-letter code: Endonuclease NucS (230 aa).

The protein belongs to the NucS endonuclease family.

Its subcellular location is the cytoplasm. Its function is as follows. Cleaves both 3' and 5' ssDNA extremities of branched DNA structures. This Corynebacterium glutamicum (strain R) protein is Endonuclease NucS.